The sequence spans 364 residues: Lipoyl synthase, mitochondrial (364 aa).

Residues cysteine 99, cysteine 104, cysteine 110, cysteine 130, cysteine 134, cysteine 137, and serine 345 each coordinate [4Fe-4S] cluster. Residues 116 to 334 (HSTQTATIML…EQRGNELGFL (219 aa)) form the Radical SAM core domain.

It belongs to the radical SAM superfamily. Lipoyl synthase family. [4Fe-4S] cluster is required as a cofactor.

The protein resides in the mitochondrion. The catalysed reaction is [[Fe-S] cluster scaffold protein carrying a second [4Fe-4S](2+) cluster] + N(6)-octanoyl-L-lysyl-[protein] + 2 oxidized [2Fe-2S]-[ferredoxin] + 2 S-adenosyl-L-methionine + 4 H(+) = [[Fe-S] cluster scaffold protein] + N(6)-[(R)-dihydrolipoyl]-L-lysyl-[protein] + 4 Fe(3+) + 2 hydrogen sulfide + 2 5'-deoxyadenosine + 2 L-methionine + 2 reduced [2Fe-2S]-[ferredoxin]. It functions in the pathway protein modification; protein lipoylation via endogenous pathway; protein N(6)-(lipoyl)lysine from octanoyl-[acyl-carrier-protein]: step 2/2. Functionally, catalyzes the radical-mediated insertion of two sulfur atoms into the C-6 and C-8 positions of the octanoyl moiety bound to the lipoyl domains of lipoate-dependent enzymes, thereby converting the octanoylated domains into lipoylated derivatives. The sequence is that of Lipoyl synthase, mitochondrial from Drosophila mojavensis (Fruit fly).